Here is a 1000-residue protein sequence, read N- to C-terminus: Peroxisomal ATPase PEX6 (1000 aa).

ATP is bound at residue 742-749; sequence GPPGTGKT.

This sequence belongs to the AAA ATPase family. In terms of assembly, interacts with PEX1; forming the PEX1-PEX6 AAA ATPase complex, which is composed of a heterohexamer formed by a trimer of PEX1-PEX6 dimers.

The protein resides in the cytoplasm. It is found in the cytosol. Its subcellular location is the peroxisome membrane. The catalysed reaction is ATP + H2O = ADP + phosphate + H(+). In terms of biological role, component of the PEX1-PEX6 AAA ATPase complex, a protein dislocase complex that mediates the ATP-dependent extraction of the PEX5 receptor from peroxisomal membranes, an essential step for PEX5 recycling. Specifically recognizes PEX5 monoubiquitinated at 'Cys-6', and pulls it out of the peroxisome lumen through the PEX2-PEX10-PEX12 retrotranslocation channel. Extraction by the PEX1-PEX6 AAA ATPase complex is accompanied by unfolding of the TPR repeats and release of bound cargo from PEX5. The sequence is that of Peroxisomal ATPase PEX6 (PEX6) from Kluyveromyces lactis (strain ATCC 8585 / CBS 2359 / DSM 70799 / NBRC 1267 / NRRL Y-1140 / WM37) (Yeast).